We begin with the raw amino-acid sequence, 205 residues long: Heme-binding protein 2 (205 aa).

The disordered stretch occupies residues M1–E39. At A2 the chain carries N-acetylalanine. S181 carries the post-translational modification Phosphoserine.

The protein belongs to the HEBP family. As to quaternary structure, monomer. Interacts with LRPPRC. May interact with BCL2L1; an interaction with BCL2L1 was observed using a peptide, but not with the full-length protein. The full-length protein would have to undergo a major conformation change for the interaction to occur. Interacts with PDCD6. As to expression, detected in placenta.

The protein resides in the cytoplasm. The protein localises to the mitochondrion. Can promote mitochondrial permeability transition and facilitate necrotic cell death under different types of stress conditions. The polypeptide is Heme-binding protein 2 (HEBP2) (Homo sapiens (Human)).